The following is a 291-amino-acid chain: START domain-containing protein 10 (291 aa).

The residue at position 1 (M1) is an N-acetylmethionine. The tract at residues M1–E20 is disordered. Positions R14–E224 constitute an START domain. K94, K197, and K202 each carry N6-succinyllysine. S253 and S259 each carry phosphoserine. The interval L260–T291 is disordered. Phosphoserine; by CK2 is present on S284. Residue S289 is modified to Phosphoserine.

Post-translationally, phosphorylation at Ser-284 by CK2 negatively regulates lipid transfer activity, possibly by decreasing membrane association.

It localises to the cell projection. Its subcellular location is the cilium. It is found in the flagellum. The protein resides in the cytoplasm. The protein localises to the membrane. Its function is as follows. May play metabolic roles in sperm maturation or fertilization. Phospholipid transfer protein that preferentially selects lipid species containing a palmitoyl or stearoyl chain on the sn-1 and an unsaturated fatty acyl chain (18:1 or 18:2) on the sn-2 position. Able to transfer phosphatidylcholine (PC) and phosphatidyetanolamline (PE) between membranes. The polypeptide is START domain-containing protein 10 (STARD10) (Homo sapiens (Human)).